We begin with the raw amino-acid sequence, 359 residues long: Threonine dehydratase biosynthetic, chloroplastic (359 aa).

2 consecutive ACT-like domains span residues alanine 184–histidine 256 and isoleucine 278–serine 349.

It belongs to the serine/threonine dehydratase family. In terms of assembly, homotetramer. The cofactor is pyridoxal 5'-phosphate. Floral buds of untreated plants. After ABA treatment or mechanical wounding is mostly accumulated in leaves, to a lesser extent in stems, but not in roots. Expressed in anthers, carpel leaves, pith cells, sepals and petals. Not expressed in stomium, vascular bundles, epidermal cells or pollen mother cells.

It is found in the plastid. It localises to the chloroplast. The enzyme catalyses L-threonine = 2-oxobutanoate + NH4(+). The protein operates within amino-acid biosynthesis; L-isoleucine biosynthesis; 2-oxobutanoate from L-threonine: step 1/1. In Solanum tuberosum (Potato), this protein is Threonine dehydratase biosynthetic, chloroplastic.